Here is a 651-residue protein sequence, read N- to C-terminus: Peptidoglycan D,D-transpeptidase MrdA (651 aa).

The helical transmembrane segment at 30–50 (LVAFLGILLLTGVLFTNIYQL) threads the bilayer. The active-site Acyl-ester intermediate is the Ser338.

Belongs to the transpeptidase family. MrdA subfamily.

Its subcellular location is the cell inner membrane. It carries out the reaction Preferential cleavage: (Ac)2-L-Lys-D-Ala-|-D-Ala. Also transpeptidation of peptidyl-alanyl moieties that are N-acyl substituents of D-alanine.. It participates in cell wall biogenesis; peptidoglycan biosynthesis. Catalyzes cross-linking of the peptidoglycan cell wall. In Haemophilus influenzae (strain ATCC 51907 / DSM 11121 / KW20 / Rd), this protein is Peptidoglycan D,D-transpeptidase MrdA.